We begin with the raw amino-acid sequence, 332 residues long: Large ribosomal subunit protein uL29m (332 aa).

Positions 19-40 are disordered; that stretch reads RFTKPKPKPAKRENVRLPTQRT. Residues 264-327 adopt a coiled-coil conformation; sequence TSENTESAIA…IQLQEEDAKN (64 aa).

It belongs to the universal ribosomal protein uL29 family. In terms of assembly, component of the mitochondrial large ribosomal subunit. Mature mitochondrial ribosomes consist of a small (37S) and a large (54S) subunit. The 37S subunit contains at least 33 different proteins and 1 molecule of RNA (15S). The 54S subunit contains at least 45 different proteins and 1 molecule of RNA (21S).

Its subcellular location is the mitochondrion. This is Large ribosomal subunit protein uL29m (MRPL4) from Kluyveromyces lactis (strain ATCC 8585 / CBS 2359 / DSM 70799 / NBRC 1267 / NRRL Y-1140 / WM37) (Yeast).